Consider the following 65-residue polypeptide: Alpha-toxin BeM10 (65 aa).

Residues 2–65 form the LCN-type CS-alpha/beta domain; sequence RDGYIADDKD…IKQKVSGKCN (64 aa). 4 cysteine pairs are disulfide-bonded: Cys12/Cys64, Cys16/Cys35, Cys22/Cys45, and Cys26/Cys47.

It belongs to the long (4 C-C) scorpion toxin superfamily. Sodium channel inhibitor family. Alpha subfamily. Expressed by the venom gland.

The protein localises to the secreted. Functionally, alpha toxins bind voltage-independently at site-3 of sodium channels (Nav) and inhibit the inactivation of the activated channels, thereby blocking neuronal transmission. Has paralytic activity in mice. The protein is Alpha-toxin BeM10 of Mesobuthus eupeus (Lesser Asian scorpion).